Consider the following 246-residue polypeptide: Probable aquaporin AqpM (246 aa).

Residues M1–E12 are Cytoplasmic-facing. A helical membrane pass occupies residues V13 to I33. Residues A34–W56 are Extracellular-facing. A helical membrane pass occupies residues F57 to I77. At S78–Y104 the chain is on the cytoplasmic side. The NPA 1 motif lies at N83 to A85. Residues I105–P125 traverse the membrane as a helical segment. The Extracellular segment spans residues A126–Q146. A helical transmembrane segment spans residues A147–V167. The Cytoplasmic portion of the chain corresponds to D168–P173. Residues G174–I194 traverse the membrane as a helical segment. Over T195 to N217 the chain is Extracellular. The NPA 2 motif lies at N200–A202. Residues L218 to W238 traverse the membrane as a helical segment. The Cytoplasmic portion of the chain corresponds to L239–E246.

Belongs to the MIP/aquaporin (TC 1.A.8) family.

Its subcellular location is the cell membrane. Its function is as follows. Channel that permits osmotically driven movement of water in both directions. The protein is Probable aquaporin AqpM (aqpM) of Archaeoglobus fulgidus (strain ATCC 49558 / DSM 4304 / JCM 9628 / NBRC 100126 / VC-16).